The sequence spans 844 residues: Elongation factor 2 (844 aa).

Residues 17-255 (TNVRNMSVIA…LWGDNYFNPK (239 aa)) enclose the tr-type G domain. Residue 26-33 (AHVDHGKS) participates in GTP binding. Residues T57 and T59 each carry the phosphothreonine modification. GTP is bound by residues 160–163 (NKVD) and 215–217 (SGL). H700 carries the post-translational modification Diphthamide.

This sequence belongs to the TRAFAC class translation factor GTPase superfamily. Classic translation factor GTPase family. EF-G/EF-2 subfamily.

It localises to the cytoplasm. The enzyme catalyses GTP + H2O = GDP + phosphate + H(+). Functionally, catalyzes the GTP-dependent ribosomal translocation step during translation elongation. During this step, the ribosome changes from the pre-translocational (PRE) to the post-translocational (POST) state as the newly formed A-site-bound peptidyl-tRNA and P-site-bound deacylated tRNA move to the P and E sites, respectively. Catalyzes the coordinated movement of the two tRNA molecules, the mRNA and conformational changes in the ribosome. The sequence is that of Elongation factor 2 (cot-3) from Neurospora crassa (strain ATCC 24698 / 74-OR23-1A / CBS 708.71 / DSM 1257 / FGSC 987).